Consider the following 255-residue polypeptide: Taurine import ATP-binding protein TauB (255 aa).

Positions 2-229 (LQISHLYADY…RFVAGESSRS (228 aa)) constitute an ABC transporter domain. 34–41 (GPSGCGKT) is a binding site for ATP.

This sequence belongs to the ABC transporter superfamily. Taurine importer (TC 3.A.1.17.1) family. As to quaternary structure, the complex is composed of two ATP-binding proteins (TauB), two transmembrane proteins (TauC) and a solute-binding protein (TauA).

It localises to the cell inner membrane. It carries out the reaction taurine(out) + ATP + H2O = taurine(in) + ADP + phosphate + H(+). Its function is as follows. Part of the ABC transporter complex TauABC involved in taurine import. Responsible for energy coupling to the transport system. In Escherichia coli O6:K15:H31 (strain 536 / UPEC), this protein is Taurine import ATP-binding protein TauB.